A 274-amino-acid chain; its full sequence is tRNA-cytidine(32) 2-sulfurtransferase (274 aa).

The PP-loop motif signature appears at 40–45 (SGGKDS). Cys115, Cys118, and Cys206 together coordinate [4Fe-4S] cluster.

The protein belongs to the TtcA family. As to quaternary structure, homodimer. It depends on Mg(2+) as a cofactor. The cofactor is [4Fe-4S] cluster.

It localises to the cytoplasm. It catalyses the reaction cytidine(32) in tRNA + S-sulfanyl-L-cysteinyl-[cysteine desulfurase] + AH2 + ATP = 2-thiocytidine(32) in tRNA + L-cysteinyl-[cysteine desulfurase] + A + AMP + diphosphate + H(+). It participates in tRNA modification. Functionally, catalyzes the ATP-dependent 2-thiolation of cytidine in position 32 of tRNA, to form 2-thiocytidine (s(2)C32). The sulfur atoms are provided by the cysteine/cysteine desulfurase (IscS) system. This Stutzerimonas stutzeri (strain A1501) (Pseudomonas stutzeri) protein is tRNA-cytidine(32) 2-sulfurtransferase.